Consider the following 122-residue polypeptide: Small ribosomal subunit protein uS13 (122 aa).

The tract at residues 95-122 (GLPVRGQRTHTNARTRKGPAKPIAGKKK) is disordered.

Belongs to the universal ribosomal protein uS13 family. As to quaternary structure, part of the 30S ribosomal subunit. Forms a loose heterodimer with protein S19. Forms two bridges to the 50S subunit in the 70S ribosome.

Located at the top of the head of the 30S subunit, it contacts several helices of the 16S rRNA. In the 70S ribosome it contacts the 23S rRNA (bridge B1a) and protein L5 of the 50S subunit (bridge B1b), connecting the 2 subunits; these bridges are implicated in subunit movement. Contacts the tRNAs in the A and P-sites. This is Small ribosomal subunit protein uS13 from Caulobacter vibrioides (strain ATCC 19089 / CIP 103742 / CB 15) (Caulobacter crescentus).